We begin with the raw amino-acid sequence, 252 residues long: Type III pantothenate kinase (252 aa).

6-13 (DVGNTHTT) lines the ATP pocket. Substrate is bound at residue 104 to 107 (GADR). Aspartate 106 (proton acceptor) is an active-site residue. K(+) is bound at residue aspartate 126. An ATP-binding site is contributed by threonine 129. Threonine 180 contributes to the substrate binding site.

It belongs to the type III pantothenate kinase family. Homodimer. It depends on NH4(+) as a cofactor. Requires K(+) as cofactor.

Its subcellular location is the cytoplasm. The enzyme catalyses (R)-pantothenate + ATP = (R)-4'-phosphopantothenate + ADP + H(+). The protein operates within cofactor biosynthesis; coenzyme A biosynthesis; CoA from (R)-pantothenate: step 1/5. In terms of biological role, catalyzes the phosphorylation of pantothenate (Pan), the first step in CoA biosynthesis. The polypeptide is Type III pantothenate kinase (Fervidobacterium nodosum (strain ATCC 35602 / DSM 5306 / Rt17-B1)).